Reading from the N-terminus, the 122-residue chain is Large ribosomal subunit protein uL14 (122 aa).

Belongs to the universal ribosomal protein uL14 family. Part of the 50S ribosomal subunit. Forms a cluster with proteins L3 and L19. In the 70S ribosome, L14 and L19 interact and together make contacts with the 16S rRNA in bridges B5 and B8.

Functionally, binds to 23S rRNA. Forms part of two intersubunit bridges in the 70S ribosome. In Macrococcus caseolyticus (strain JCSC5402) (Macrococcoides caseolyticum), this protein is Large ribosomal subunit protein uL14.